Consider the following 443-residue polypeptide: 3-phosphoshikimate 1-carboxyvinyltransferase (443 aa).

Positions 25, 26, and 30 each coordinate 3-phosphoshikimate. Lys-25 contacts phosphoenolpyruvate. Positions 117 and 145 each coordinate phosphoenolpyruvate. 3-phosphoshikimate-binding residues include Ser-188, Ser-189, Gln-190, Ser-217, Glu-331, and His-358. Residue Gln-190 coordinates phosphoenolpyruvate. The active-site Proton acceptor is Glu-331. Residues Arg-362, Arg-404, and Lys-428 each coordinate phosphoenolpyruvate.

The protein belongs to the EPSP synthase family. Monomer.

The protein localises to the cytoplasm. The enzyme catalyses 3-phosphoshikimate + phosphoenolpyruvate = 5-O-(1-carboxyvinyl)-3-phosphoshikimate + phosphate. It functions in the pathway metabolic intermediate biosynthesis; chorismate biosynthesis; chorismate from D-erythrose 4-phosphate and phosphoenolpyruvate: step 6/7. In terms of biological role, catalyzes the transfer of the enolpyruvyl moiety of phosphoenolpyruvate (PEP) to the 5-hydroxyl of shikimate-3-phosphate (S3P) to produce enolpyruvyl shikimate-3-phosphate and inorganic phosphate. This chain is 3-phosphoshikimate 1-carboxyvinyltransferase, found in Tropheryma whipplei (strain TW08/27) (Whipple's bacillus).